Here is a 361-residue protein sequence, read N- to C-terminus: MSVLTVHTSSKVYNVTVKSGVLSQIGSYIAPLRPSAILIVTDDQVADLYLDTVKSSLHNLAPLHAVVLPNGEETKSFDNYYALQTAALEYGLDRKSMIIALGGGVIGDLAGFVAATYMRGIAYVQVPTTLLAHDSSVGGKVAINHPLGKNMIGAFHQPEAVLYDPQVFATLPEREWRSGFAEVVKHGLIKDAAFYAWLQKYINDFSRIQGEIAEELLLRSIQVKANIVAADEKEKGERALLNLGHTLGHAIEAELGYGKITHGEAVVIGIIFAMKLSEKVYHQSLPIQDLEKWLKFLGYETRIPKGLDTGALIGTMKKDKKVERGVIRFVLLEEVGHAVIKEVDEQLIRELLNVEIEEETT.

NAD(+) contacts are provided by residues 104–108 (GVIGD), 128–129 (TT), K140, and K149. Positions 182, 245, and 262 each coordinate Zn(2+).

The protein belongs to the sugar phosphate cyclases superfamily. Dehydroquinate synthase family. NAD(+) is required as a cofactor. Requires Co(2+) as cofactor. The cofactor is Zn(2+).

The protein resides in the cytoplasm. It carries out the reaction 7-phospho-2-dehydro-3-deoxy-D-arabino-heptonate = 3-dehydroquinate + phosphate. It participates in metabolic intermediate biosynthesis; chorismate biosynthesis; chorismate from D-erythrose 4-phosphate and phosphoenolpyruvate: step 2/7. Its function is as follows. Catalyzes the conversion of 3-deoxy-D-arabino-heptulosonate 7-phosphate (DAHP) to dehydroquinate (DHQ). In Halalkalibacterium halodurans (strain ATCC BAA-125 / DSM 18197 / FERM 7344 / JCM 9153 / C-125) (Bacillus halodurans), this protein is 3-dehydroquinate synthase.